Here is a 62-residue protein sequence, read N- to C-terminus: Photosystem II reaction center protein Z (62 aa).

The next 2 membrane-spanning stretches (helical) occupy residues 8-28 (AVFA…VVFA) and 41-61 (FSGT…NSLI).

This sequence belongs to the PsbZ family. PSII is composed of 1 copy each of membrane proteins PsbA, PsbB, PsbC, PsbD, PsbE, PsbF, PsbH, PsbI, PsbJ, PsbK, PsbL, PsbM, PsbT, PsbY, PsbZ, Psb30/Ycf12, at least 3 peripheral proteins of the oxygen-evolving complex and a large number of cofactors. It forms dimeric complexes.

It localises to the plastid. The protein resides in the chloroplast thylakoid membrane. Functionally, may control the interaction of photosystem II (PSII) cores with the light-harvesting antenna, regulates electron flow through the 2 photosystem reaction centers. PSII is a light-driven water plastoquinone oxidoreductase, using light energy to abstract electrons from H(2)O, generating a proton gradient subsequently used for ATP formation. In Jasminum nudiflorum (Winter jasmine), this protein is Photosystem II reaction center protein Z.